We begin with the raw amino-acid sequence, 304 residues long: Polyisoprenyl-teichoic acid--peptidoglycan teichoic acid transferase TagU (304 aa).

Residues 1–4 lie on the Cytoplasmic side of the membrane; sequence MKKK. Residues 5–25 form a helical; Signal-anchor for type II membrane protein membrane-spanning segment; sequence ILFWILGIIGIMIIGGGVYAY. At 26–304 the chain is on the extracellular side; the sequence is NVYSSVSKTL…KLRAHLELTK (279 aa).

It belongs to the LytR/CpsA/Psr (LCP) family.

The protein localises to the cell membrane. It functions in the pathway cell wall biogenesis. May catalyze the final step in cell wall teichoic acid biosynthesis, the transfer of the anionic cell wall polymers (APs) from their lipid-linked precursor to the cell wall peptidoglycan (PG). This chain is Polyisoprenyl-teichoic acid--peptidoglycan teichoic acid transferase TagU, found in Bacillus mycoides (strain KBAB4) (Bacillus weihenstephanensis).